A 110-amino-acid chain; its full sequence is PTS system oligo-beta-mannoside-specific EIIA component (110 aa).

The PTS EIIA type-3 domain maps to 9-107 (LTDEQISFQL…VKEMLDLFKT (99 aa)). H83 functions as the Tele-phosphohistidine intermediate in the catalytic mechanism. H83 is subject to Phosphohistidine; by HPr.

Its subcellular location is the cytoplasm. The phosphoenolpyruvate-dependent sugar phosphotransferase system (sugar PTS), a major carbohydrate active transport system, catalyzes the phosphorylation of incoming sugar substrates concomitantly with their translocation across the cell membrane. The enzyme II GmuABC PTS system is involved in the transport of oligo-glucomannans such as cellobiose or mannobiose. This chain is PTS system oligo-beta-mannoside-specific EIIA component, found in Bacillus subtilis (strain 168).